Reading from the N-terminus, the 691-residue chain is Solute carrier organic anion transporter family member 1B1 (691 aa).

Residues M1–K28 are Cytoplasmic-facing. Residues M29–M48 traverse the membrane as a helical segment. The Extracellular portion of the chain corresponds to K49–G67. Residues F68 to G88 traverse the membrane as a helical segment. Residues S89 to P94 lie on the Cytoplasmic side of the membrane. The helical transmembrane segment at K95–G119 threads the bilayer. Residues Y120–S168 lie on the Extracellular side of the membrane. N-linked (GlcNAc...) asparagine glycosylation is found at N130 and N134. The chain crosses the membrane as a helical span at residues Y169–D197. The Cytoplasmic portion of the chain corresponds to D198–A216. The chain crosses the membrane as a helical span at residues M217–I237. At G238 to V255 the chain is on the extracellular side. Residues G256–P280 form a helical membrane-spanning segment. Residues Q281–S331 are Cytoplasmic-facing. 2 positions are modified to phosphoserine: S293 and S295. The chain crosses the membrane as a helical span at residues I332 to I353. Residues G354–K373 are Extracellular-facing. A helical transmembrane segment spans residues A374 to I397. Topologically, residues K398 to K401 are cytoplasmic. The helical transmembrane segment at L402–Y425 threads the bilayer. The Extracellular segment spans residues F426 to F537. N432 carries an N-linked (GlcNAc...) asparagine glycan. A Kazal-like domain is found at D453 to E508. 3 disulfides stabilise this stretch: C459–C489, C465–C485, and C474–C506. N-linked (GlcNAc...) asparagine glycosylation is found at N503 and N516. Residues V538 to V560 traverse the membrane as a helical segment. At K561–S569 the chain is on the cytoplasmic side. Residues L570 to I595 form a helical membrane-spanning segment. The Extracellular segment spans residues D596–S629. N617 carries N-linked (GlcNAc...) asparagine glycosylation. Residues S630–M647 form a helical membrane-spanning segment. At K648 to C691 the chain is on the cytoplasmic side. A phosphoserine mark is found at S672 and S682.

It belongs to the organo anion transporter (TC 2.A.60) family. In terms of tissue distribution, highly expressed in liver, at the basolateral membranes of centrilobular hepatocytes. Expressed in liver (at protein level). Expressed in fetal liver. Not detected in heart, brain, placenta, lung, skeletal muscle, kidney, pancreas, spleen, thymus, prostate, testis, ovary, small intestine, colon and leukocyte. In testis, primarily localized to the basal membrane of Sertoli cells and weakly expressed in Leydig cells and within the tubules.

It localises to the basolateral cell membrane. Its subcellular location is the basal cell membrane. It catalyses the reaction taurocholate(out) = taurocholate(in). The catalysed reaction is dehydroepiandrosterone 3-sulfate(out) = dehydroepiandrosterone 3-sulfate(in). It carries out the reaction estrone 3-sulfate(out) = estrone 3-sulfate(in). The enzyme catalyses 3,3',5'-triiodo-L-thyronine(out) = 3,3',5'-triiodo-L-thyronine(in). It catalyses the reaction L-thyroxine(out) = L-thyroxine(in). The catalysed reaction is prostaglandin E2(out) = prostaglandin E2(in). It carries out the reaction thromboxane B2(out) = thromboxane B2(in). The enzyme catalyses 17beta-estradiol 17-O-(beta-D-glucuronate)(out) = 17beta-estradiol 17-O-(beta-D-glucuronate)(in). It catalyses the reaction leukotriene C4(out) = leukotriene C4(in). The catalysed reaction is leukotriene E4(out) = leukotriene E4(in). It carries out the reaction (4E,15E)-bilirubin IXalpha C8-beta-D-glucuronoside(out) = (4E,15E)-bilirubin IXalpha C8-beta-D-glucuronoside(in). The enzyme catalyses bilirubin IXalpha bis-beta-D-glucuronoside(out) = bilirubin IXalpha bis-beta-D-glucuronoside(in). Its function is as follows. Mediates the Na(+)-independent uptake of organic anions. Shows broad substrate specificity, can transport both organic anions such as bile acid taurocholate (cholyltaurine) and conjugated steroids (dehydroepiandrosterone 3-sulfate, 17-beta-glucuronosyl estradiol, and estrone 3-sulfate), as well as eicosanoids (prostaglandin E2, thromboxane B2, leukotriene C4, and leukotriene E4), and thyroid hormones (T4/L-thyroxine, and T3/3,3',5'-triiodo-L-thyronine). Can take up bilirubin glucuronides from plasma into the liver, contributing to the detoxification-enhancing liver-blood shuttling loop. Involved in the clearance of endogenous and exogenous substrates from the liver. Transports coproporphyrin I and III, by-products of heme synthesis, and may be involved in their hepatic disposition. May contribute to regulate the transport of organic compounds in testes across the blood-testis-barrier. Can transport HMG-CoA reductase inhibitors (also known as statins), such as pravastatin and pitavastatin, a clinically important class of hypolipidemic drugs. May play an important role in plasma and tissue distribution of the structurally diverse chemotherapeutic drug methotrexate. May also transport antihypertension agents, such as the angiotensin-converting enzyme (ACE) inhibitor prodrug enalapril, and the highly selective angiotensin II AT1-receptor antagonist valsartan, in the liver. Shows a pH-sensitive substrate specificity towards prostaglandin E2 and T4 which may be ascribed to the protonation state of the binding site and leads to a stimulation of substrate transport in an acidic microenvironment. Hydrogencarbonate/HCO3(-) acts as the probable counteranion that exchanges for organic anions. This chain is Solute carrier organic anion transporter family member 1B1 (SLCO1B1), found in Homo sapiens (Human).